We begin with the raw amino-acid sequence, 344 residues long: Anthranilate phosphoribosyltransferase (344 aa).

Residues Gly83, 86–87, Thr91, 93–96, 111–119, and Ser123 each bind 5-phospho-alpha-D-ribose 1-diphosphate; these read GD, NIST, and KHGGRSVSS. Residue Gly83 participates in anthranilate binding. Ser95 contributes to the Mg(2+) binding site. Arg169 is a binding site for anthranilate. Asp228 and Glu229 together coordinate Mg(2+).

The protein belongs to the anthranilate phosphoribosyltransferase family. As to quaternary structure, homodimer. Mg(2+) serves as cofactor.

The catalysed reaction is N-(5-phospho-beta-D-ribosyl)anthranilate + diphosphate = 5-phospho-alpha-D-ribose 1-diphosphate + anthranilate. Its pathway is amino-acid biosynthesis; L-tryptophan biosynthesis; L-tryptophan from chorismate: step 2/5. In terms of biological role, catalyzes the transfer of the phosphoribosyl group of 5-phosphorylribose-1-pyrophosphate (PRPP) to anthranilate to yield N-(5'-phosphoribosyl)-anthranilate (PRA). The protein is Anthranilate phosphoribosyltransferase of Methylibium petroleiphilum (strain ATCC BAA-1232 / LMG 22953 / PM1).